A 703-amino-acid polypeptide reads, in one-letter code: Polyribonucleotide nucleotidyltransferase (703 aa).

Mg(2+) contacts are provided by aspartate 489 and aspartate 495. The region spanning 556-615 is the KH domain; that stretch reads PTMIAMKIDTDKIRDVIGKGGATIRAICEETKASIDIEDDGSIKIFGETKEAAEAARQRV. An S1 motif domain is found at 625 to 693; that stretch reads GKIYVGKVER…NRGRIKLSIK (69 aa).

Belongs to the polyribonucleotide nucleotidyltransferase family. Component of the RNA degradosome, which is a multiprotein complex involved in RNA processing and mRNA degradation. Mg(2+) is required as a cofactor.

Its subcellular location is the cytoplasm. The catalysed reaction is RNA(n+1) + phosphate = RNA(n) + a ribonucleoside 5'-diphosphate. Functionally, involved in mRNA degradation. Catalyzes the phosphorolysis of single-stranded polyribonucleotides processively in the 3'- to 5'-direction. The chain is Polyribonucleotide nucleotidyltransferase from Pseudomonas fluorescens (strain ATCC BAA-477 / NRRL B-23932 / Pf-5).